The primary structure comprises 163 residues: Nucleotide-binding protein YPDSF_2805 (163 aa).

This sequence belongs to the YajQ family.

Nucleotide-binding protein. In Yersinia pestis (strain Pestoides F), this protein is Nucleotide-binding protein YPDSF_2805.